The following is a 527-amino-acid chain: Cytochrome b5 reductase 4 (527 aa).

Positions 1–24 (MLNVPSQAFPAAGSQQRVAPAGQS) are disordered. The 77-residue stretch at 56-132 (LIEVTEDELK…LKECLVGRMA (77 aa)) folds into the Cytochrome b5 heme-binding domain. Heme is bound by residues H91 and H114. Positions 138–171 (ALQAHTEKTESTHLNGLSAPPSLRPEPLSAPLPA) are disordered. The 92-residue stretch at 173–264 (DHRPRYDWFQ…SVKEKWTQLG (92 aa)) folds into the CS domain. One can recognise an FAD-binding FR-type domain in the interval 281–392 (LFYRECVLLS…GGPEGSFTLR (112 aa)). Residues 372-387 (ANLP…GPEG) and 399-431 (HLYM…KMKL) each bind FAD.

It belongs to the flavoprotein pyridine nucleotide cytochrome reductase family. FAD serves as cofactor.

The protein resides in the endoplasmic reticulum. It carries out the reaction 2 Fe(III)-[cytochrome b5] + NADH = 2 Fe(II)-[cytochrome b5] + NAD(+) + H(+). In terms of biological role, NADH-cytochrome b5 reductase involved in endoplasmic reticulum stress response pathway. The chain is Cytochrome b5 reductase 4 (cyb5r4) from Danio rerio (Zebrafish).